The following is a 104-amino-acid chain: Large ribosomal subunit protein uL24 (104 aa).

It belongs to the universal ribosomal protein uL24 family. As to quaternary structure, part of the 50S ribosomal subunit.

Functionally, one of two assembly initiator proteins, it binds directly to the 5'-end of the 23S rRNA, where it nucleates assembly of the 50S subunit. One of the proteins that surrounds the polypeptide exit tunnel on the outside of the subunit. This is Large ribosomal subunit protein uL24 from Shigella flexneri.